We begin with the raw amino-acid sequence, 227 residues long: Probable GTP-binding protein EngB (227 aa).

The 176-residue stretch at 13 to 188 folds into the EngB-type G domain; sequence IGLEVAFAGR…AGVMGNWYEY (176 aa). GTP-binding positions include 21-28, 48-52, 67-70, 134-137, and 167-169; these read GRSNAGKS, GRTQM, DLPG, TKAD, and FSA. Mg(2+) contacts are provided by S28 and T50.

The protein belongs to the TRAFAC class TrmE-Era-EngA-EngB-Septin-like GTPase superfamily. EngB GTPase family. Mg(2+) serves as cofactor.

Functionally, necessary for normal cell division and for the maintenance of normal septation. In Psychrobacter cryohalolentis (strain ATCC BAA-1226 / DSM 17306 / VKM B-2378 / K5), this protein is Probable GTP-binding protein EngB.